The sequence spans 98 residues: MSYYQQQCKQPCQPPPVCPPPKCPEPCPPPKCPEPCPPPVCCEPCPPPKCPEPCPPPVCCEPCPPPVCCEPCPPQPWQPKCPPVQFPPCQQKCPPKNK.

Tandem repeats lie at residues 21–29, 30–38, 39–47, 48–56, and 57–65. Residues 21 to 65 form a 5 X 9 AA approximate tandem repeats region; sequence PKCPEPCPPPKCPEPCPPPVCCEPCPPPKCPEPCPPPVCCEPCPP.

It belongs to the cornifin (SPRR) family. In terms of tissue distribution, expressed in uterus.

The protein localises to the cytoplasm. Cross-linked envelope protein of keratinocytes. It is a keratinocyte protein that first appears in the cell cytosol, but ultimately becomes cross-linked to membrane proteins by transglutaminase. All that results in the formation of an insoluble envelope beneath the plasma membrane. The chain is Small proline-rich protein 2B (Sprr2b) from Mus musculus (Mouse).